The primary structure comprises 97 residues: Large ribosomal subunit protein bL28 (97 aa).

It belongs to the bacterial ribosomal protein bL28 family.

The protein is Large ribosomal subunit protein bL28 of Rickettsia akari (strain Hartford).